A 354-amino-acid chain; its full sequence is Uroporphyrinogen decarboxylase (354 aa).

Substrate is bound by residues 27-31, F46, D77, Y154, T209, and H327; that span reads RQAGR.

It belongs to the uroporphyrinogen decarboxylase family. In terms of assembly, homodimer.

The protein resides in the cytoplasm. It catalyses the reaction uroporphyrinogen III + 4 H(+) = coproporphyrinogen III + 4 CO2. It functions in the pathway porphyrin-containing compound metabolism; protoporphyrin-IX biosynthesis; coproporphyrinogen-III from 5-aminolevulinate: step 4/4. In terms of biological role, catalyzes the decarboxylation of four acetate groups of uroporphyrinogen-III to yield coproporphyrinogen-III. This chain is Uroporphyrinogen decarboxylase, found in Escherichia coli O157:H7.